The following is a 631-amino-acid chain: Dolichyl-diphosphooligosaccharide--protein glycosyltransferase subunit 2 (631 aa).

The first 22 residues, 1–22, serve as a signal peptide directing secretion; that stretch reads MALPGSSTVFLLALTIIASTQA. The Lumenal segment spans residues 23–540; that stretch reads LTPTHYLTKH…REPEKRPPTV (518 aa). An N-linked (GlcNAc...) asparagine glycan is attached at N106. K154 participates in a covalent cross-link: Glycyl lysine isopeptide (Lys-Gly) (interchain with G-Cter in ubiquitin). The chain crosses the membrane as a helical span at residues 541 to 561; it reads VSNTFTALILSPLLLLFALWI. At 562–571 the chain is on the cytoplasmic side; sequence RIGANVSNFT. The helical transmembrane segment at 572–592 threads the bilayer; that stretch reads FAPSTIVFHLGHAAMLGLMYV. At 593-596 the chain is on the lumenal side; that stretch reads YWTQ. The chain crosses the membrane as a helical span at residues 597-617; it reads LNMFQTLKYLAILGSVTFLAG. Topologically, residues 618–631 are cytoplasmic; it reads NRMLAQQAIKRTAH.

This sequence belongs to the SWP1 family. As to quaternary structure, component of the oligosaccharyltransferase (OST) complex. OST exists in two different complex forms which contain common core subunits RPN1, RPN2, OST48, OST4, DAD1 and TMEM258, either STT3A or STT3B as catalytic subunits, and form-specific accessory subunits. STT3A complex assembly occurs through the formation of 3 subcomplexes. Subcomplex 1 contains RPN1 and TMEM258, subcomplex 2 contains the STT3A-specific subunits STT3A, DC2/OSTC, and KCP2 as well as the core subunit OST4, and subcomplex 3 contains RPN2, DAD1, and OST48. The STT3A complex can form stable complexes with the Sec61 complex or with both the Sec61 and TRAP complexes. Interacts with DDI2. Interacts with TMEM35A/NACHO.

The protein resides in the endoplasmic reticulum. It localises to the endoplasmic reticulum membrane. Its pathway is protein modification; protein glycosylation. In terms of biological role, subunit of the oligosaccharyl transferase (OST) complex that catalyzes the initial transfer of a defined glycan (Glc(3)Man(9)GlcNAc(2) in eukaryotes) from the lipid carrier dolichol-pyrophosphate to an asparagine residue within an Asn-X-Ser/Thr consensus motif in nascent polypeptide chains, the first step in protein N-glycosylation. N-glycosylation occurs cotranslationally and the complex associates with the Sec61 complex at the channel-forming translocon complex that mediates protein translocation across the endoplasmic reticulum (ER). All subunits are required for a maximal enzyme activity. The protein is Dolichyl-diphosphooligosaccharide--protein glycosyltransferase subunit 2 of Bos taurus (Bovine).